The chain runs to 169 residues: Adenine phosphoribosyltransferase (169 aa).

It belongs to the purine/pyrimidine phosphoribosyltransferase family. In terms of assembly, homodimer.

The protein localises to the cytoplasm. It catalyses the reaction AMP + diphosphate = 5-phospho-alpha-D-ribose 1-diphosphate + adenine. It functions in the pathway purine metabolism; AMP biosynthesis via salvage pathway; AMP from adenine: step 1/1. Its function is as follows. Catalyzes a salvage reaction resulting in the formation of AMP, that is energically less costly than de novo synthesis. This is Adenine phosphoribosyltransferase from Mycoplasmopsis synoviae (strain 53) (Mycoplasma synoviae).